A 625-amino-acid polypeptide reads, in one-letter code: tRNA-guanine(15) transglycosylase (625 aa).

Aspartate 86 functions as the Nucleophile in the catalytic mechanism. 2 residues coordinate substrate: aspartate 121 and glycine 184. The PUA domain maps to 546 to 621; that stretch reads GLRVVVDDES…VAVKVHEGVN (76 aa).

The protein belongs to the archaeosine tRNA-ribosyltransferase family. The cofactor is Zn(2+).

It catalyses the reaction guanosine(15) in tRNA + 7-cyano-7-deazaguanine = 7-cyano-7-carbaguanosine(15) in tRNA + guanine. It participates in tRNA modification; archaeosine-tRNA biosynthesis. Its function is as follows. Exchanges the guanine residue with 7-cyano-7-deazaguanine (preQ0) at position 15 in the dihydrouridine loop (D-loop) of archaeal tRNAs. The polypeptide is tRNA-guanine(15) transglycosylase (Picrophilus torridus (strain ATCC 700027 / DSM 9790 / JCM 10055 / NBRC 100828 / KAW 2/3)).